We begin with the raw amino-acid sequence, 801 residues long: Na(+)/H(+) antiporter subunit A1 (801 aa).

The next 21 membrane-spanning stretches (helical) occupy residues 4–25 (LHIA…YRFF), 30–49 (LGWF…LTLI), 79–101 (LGLL…SIGY), 108–127 (LGNF…GVVL), 131–153 (VIIL…SFWR), 166–188 (LIIT…IPTQ), 208–230 (FIFA…PFYI), 243–265 (SAYL…MTPI), 270–289 (QGWV…WASL), 302–324 (AFST…ISYH), 339–361 (AAIF…TGAV), 373–395 (LGGL…LSMA), 429–451 (YLFP…KFIM), 472–494 (ILML…FPGI), 526–548 (AFLS…SYWV), 589–611 (NNLV…SVPF), 621–641 (IRIF…LILF), 646–668 (LFSI…FFKA), 672–694 (ALTQ…YHLP), 707–729 (LTNA…IAYG), and 767–784 (LFES…YTMI).

It belongs to the CPA3 antiporters (TC 2.A.63) subunit A family. May form a heterooligomeric complex that consists of seven subunits: mnhA1, mnhB1, mnhC1, mnhD1, mnhE1, mnhF1 and mnhG1.

The protein localises to the cell membrane. Na(+) extrusion is completely inhibited by the H(+) conductor carbonyl cyanide m-chlorophenylhydrazone (CCCP). Mnh complex is a Na(+)Li(+)/H(+) antiporter involved in Na(+) and/or Li(+) excretion. Na(+)/H(+) antiport consumes a transmembrane electrical potential, and is thus inferred to be electrogenic. Does not transport K(+), Ca(2+) or Mg(2+). This chain is Na(+)/H(+) antiporter subunit A1 (mnhA1), found in Staphylococcus aureus.